We begin with the raw amino-acid sequence, 188 residues long: Elongation factor P (188 aa).

The protein belongs to the elongation factor P family.

It localises to the cytoplasm. The protein operates within protein biosynthesis; polypeptide chain elongation. Functionally, involved in peptide bond synthesis. Stimulates efficient translation and peptide-bond synthesis on native or reconstituted 70S ribosomes in vitro. Probably functions indirectly by altering the affinity of the ribosome for aminoacyl-tRNA, thus increasing their reactivity as acceptors for peptidyl transferase. The chain is Elongation factor P from Rhodospirillum centenum (strain ATCC 51521 / SW).